The following is a 432-amino-acid chain: Glial fibrillary acidic protein (432 aa).

Residues 1–72 (MERRRITSAA…KETRASERAE (72 aa)) form a head region. Thr-7 carries the post-translational modification Phosphothreonine; by AURKB and ROCK1. Arg-12 carries the post-translational modification Omega-N-methylarginine. At Ser-13 the chain carries Phosphoserine; by AURKB and ROCK1. Arg-30 and Arg-36 each carry citrulline. At Ser-38 the chain carries Phosphoserine; by AURKB and ROCK1. One can recognise an IF rod domain in the interval 69–377 (ERAEMMELND…KLLEGEENRI (309 aa)). The segment at 73 to 104 (MMELNDRFASYIEKVRFLEQQNKALAAELNQL) is coil 1A. Ser-82 bears the Phosphoserine mark. Residues 105 to 115 (RAKEPTKLADV) are linker 1. A phosphothreonine mark is found at Thr-110 and Thr-150. A coil 1B region spans residues 116–214 (YQAELRELRL…EEEVRELQEQ (99 aa)). The interval 215-230 (LARQQVHVELDMAKPD) is linker 12. Residues 231 to 252 (LTAALKEIRTQYEAMASSNMHE) form a coil 2A region. The interval 253–256 (AEEW) is linker 2. The coil 2B stretch occupies residues 257-377 (YRSKFADLTD…KLLEGEENRI (121 aa)). Position 270 is a citrulline (Arg-270). Ser-323 is subject to Phosphoserine. Residues 378–432 (TIPVQTFSNLQIRETSLDTKSVSEGHLKRNIVVKTVEMRDGEVIKESKQEHKDVM) form a tail region. The residue at position 383 (Thr-383) is a Phosphothreonine. Phosphoserine is present on Ser-385. Citrulline is present on residues Arg-406 and Arg-416.

Belongs to the intermediate filament family. As to quaternary structure, interacts with SYNM. Post-translationally, phosphorylated by PKN1.

It localises to the cytoplasm. Its function is as follows. GFAP, a class-III intermediate filament, is a cell-specific marker that, during the development of the central nervous system, distinguishes astrocytes from other glial cells. The polypeptide is Glial fibrillary acidic protein (GFAP) (Pongo abelii (Sumatran orangutan)).